A 200-amino-acid polypeptide reads, in one-letter code: Superoxide dismutase [Mn] 1 (200 aa).

Mn(2+) is bound by residues His29, His76, Asp158, and His162.

This sequence belongs to the iron/manganese superoxide dismutase family. The cofactor is Mn(2+).

It carries out the reaction 2 superoxide + 2 H(+) = H2O2 + O2. Destroys superoxide anion radicals which are normally produced within the cells and which are toxic to biological systems. The chain is Superoxide dismutase [Mn] 1 (sod1) from Haloferax volcanii (strain ATCC 29605 / DSM 3757 / JCM 8879 / NBRC 14742 / NCIMB 2012 / VKM B-1768 / DS2) (Halobacterium volcanii).